The primary structure comprises 326 residues: Cinnamoyl-CoA reductase CAD2 (326 aa).

Residues 14 to 20 (GASGYIA), Arg-39, Lys-46, 66 to 67 (NL), and 86 to 88 (TAS) each bind NADP(+). Positions 130, 136, 141, and 165 each coordinate (E)-coniferaldehyde. NADP(+) contacts are provided by residues Tyr-165, Lys-169, 192 to 195 (PAMV), and Ser-207. The active-site Proton donor is Lys-169. The (E)-coniferaldehyde site is built by Met-194, Ser-207, Phe-226, Val-257, and Tyr-290.

This sequence belongs to the NAD(P)-dependent epimerase/dehydratase family. Dihydroflavonol-4-reductase subfamily.

It is found in the cytoplasm. The catalysed reaction is (E)-cinnamaldehyde + NADP(+) + CoA = (E)-cinnamoyl-CoA + NADPH + H(+). The enzyme catalyses (E)-coniferaldehyde + NADP(+) + CoA = (E)-feruloyl-CoA + NADPH + H(+). It carries out the reaction (E)-4-coumaraldehyde + NADP(+) + CoA = (E)-4-coumaroyl-CoA + NADPH + H(+). The protein operates within aromatic compound metabolism; phenylpropanoid biosynthesis. Involved in lignin biosynthesis. Regulates the monolignol composition by catalyzing the conversion of cinnamoyl-CoAs into their corresponding cinnamaldehydes. Can use coumaraldehyde and coniferaldehyde as substrates, but barely sinapaldehyde. The sequence is that of Cinnamoyl-CoA reductase CAD2 from Medicago truncatula (Barrel medic).